The chain runs to 664 residues: UvrABC system protein B (664 aa).

In terms of domain architecture, Helicase ATP-binding spans 25-412 (KGLVSGLTDQ…LQVVEQLVRP (388 aa)). 38-45 (GVTGSGKT) provides a ligand contact to ATP. The Beta-hairpin motif lies at 91–114 (YYDYYQPEAYVPQKDMYIEKDSDI). The 167-residue stretch at 428–594 (QIDDLLEEVK…GIRKAIKDIN (167 aa)) folds into the Helicase C-terminal domain. The 36-residue stretch at 620 to 655 (ARLIKELESQMKKAAKNLEFERAALIRDRVVELRAA) folds into the UVR domain.

The protein belongs to the UvrB family. In terms of assembly, forms a heterotetramer with UvrA during the search for lesions. Interacts with UvrC in an incision complex.

It is found in the cytoplasm. Functionally, the UvrABC repair system catalyzes the recognition and processing of DNA lesions. A damage recognition complex composed of 2 UvrA and 2 UvrB subunits scans DNA for abnormalities. Upon binding of the UvrA(2)B(2) complex to a putative damaged site, the DNA wraps around one UvrB monomer. DNA wrap is dependent on ATP binding by UvrB and probably causes local melting of the DNA helix, facilitating insertion of UvrB beta-hairpin between the DNA strands. Then UvrB probes one DNA strand for the presence of a lesion. If a lesion is found the UvrA subunits dissociate and the UvrB-DNA preincision complex is formed. This complex is subsequently bound by UvrC and the second UvrB is released. If no lesion is found, the DNA wraps around the other UvrB subunit that will check the other stand for damage. The polypeptide is UvrABC system protein B (Dehalococcoides mccartyi (strain CBDB1)).